The chain runs to 451 residues: FAD-dependent monooxygenase adrH (451 aa).

Residues Glu39, Gly53, and Arg112 each contribute to the FAD site. Tyr196 is an active-site residue. Residues Asp288 and Ala301 each contribute to the FAD site. N-linked (GlcNAc...) asparagine glycosylation occurs at Asn385. Residues 426–446 (TLLWVSSLALFLFFPWLGSYL) form a helical membrane-spanning segment.

It belongs to the paxM FAD-dependent monooxygenase family. It depends on FAD as a cofactor.

The protein resides in the membrane. It participates in secondary metabolite biosynthesis; terpenoid biosynthesis. Functionally, FAD-dependent monooxygenase; part of the gene cluster that mediates the biosynthesis of andrastins, meroterpenoid compounds that exhibit inhibitory activity against ras farnesyltransferase, suggesting that they could be promising leads for antitumor agents. The first step of the pathway is the synthesis of 3,5-dimethylorsellinic acid (DMOA) by the polyketide synthase adrD via condensation of one acetyl-CoA starter unit with 3 malonyl-CoA units and 2 methylations. DMAO is then converted to farnesyl-DMAO by the prenyltransferase adrG. The methyltransferase adrK catalyzes the methylation of the carboxyl group of farnesyl-DMAO to farnesyl-DMAO methyl ester which is further converted to epoxyfarnesyl-DMAO methyl ester by the FAD-dependent monooxygenase adrH. The terpene cyclase adrI then catalyzes the carbon skeletal rearrangement to generate the andrastin E, the first compound in the pathway having the andrastin scaffold, with the tetracyclic ring system. The post-cyclization tailoring enzymes adrF, adrE, adrJ, and adrA, are involved in the conversion of andrastin E into andrastin A. The short chain dehydrogenase adrF is responsible for the oxidation of the C-3 a hydroxyl group of andrastin E to yield the corresponding ketone, andrastin D. The ketoreductase adrE stereoselectively reduces the carbonyl moiety to reverse the stereochemistry of the C-3 position to yield andrastin F. The acetyltransferase adrJ is the acetyltransferase that attaches the acetyl group to the C-3 hydroxyl group of andrastin F to yield andrastin C. Finally, the cytochrome P450 monooxygenase adrA catalyzes two sequential oxidation reactions of the C-23 methyl group, to generate the corresponding alcohol andrastin B, and aldehyde andrastin A. The sequence is that of FAD-dependent monooxygenase adrH from Penicillium rubens (strain ATCC 28089 / DSM 1075 / NRRL 1951 / Wisconsin 54-1255) (Penicillium chrysogenum).